Here is a 124-residue protein sequence, read N- to C-terminus: Small ribosomal subunit protein uS12 (124 aa).

3-methylthioaspartic acid is present on Asp89.

The protein belongs to the universal ribosomal protein uS12 family. Part of the 30S ribosomal subunit. Contacts proteins S8 and S17. May interact with IF1 in the 30S initiation complex.

Functionally, with S4 and S5 plays an important role in translational accuracy. Its function is as follows. Interacts with and stabilizes bases of the 16S rRNA that are involved in tRNA selection in the A site and with the mRNA backbone. Located at the interface of the 30S and 50S subunits, it traverses the body of the 30S subunit contacting proteins on the other side and probably holding the rRNA structure together. The combined cluster of proteins S8, S12 and S17 appears to hold together the shoulder and platform of the 30S subunit. In Hydrogenovibrio crunogenus (strain DSM 25203 / XCL-2) (Thiomicrospira crunogena), this protein is Small ribosomal subunit protein uS12.